Here is a 333-residue protein sequence, read N- to C-terminus: Endo-1,4-beta-xylanase (333 aa).

The N-terminal stretch at 1–17 (MYLVAFMLLAILPTGYC) is a signal peptide. The region spanning 18–330 (QLNTLAVRAG…KPAYQGIVDG (313 aa)) is the GH10 domain. The active-site Proton donor is Glu147. The Nucleophile role is filled by Glu252.

It belongs to the glycosyl hydrolase 10 (cellulase F) family.

It localises to the secreted. The catalysed reaction is Endohydrolysis of (1-&gt;4)-beta-D-xylosidic linkages in xylans.. The protein operates within glycan degradation; xylan degradation. Functionally, has xylanase activity. Seems to be involved in the release of sugars from the hemicellulolytic fraction in the compost. The sequence is that of Endo-1,4-beta-xylanase (xlnA) from Agaricus bisporus (White button mushroom).